Here is a 729-residue protein sequence, read N- to C-terminus: Serine/threonine-protein kinase TBK1 (729 aa).

Residues 9–310 (WLLSDILGQG…ETSDVLHRMV (302 aa)) enclose the Protein kinase domain. 15–23 (LGQGATANV) is an ATP binding site. Lys30 participates in a covalent cross-link: Glycyl lysine isopeptide (Lys-Gly) (interchain with G-Cter in ubiquitin). Lys38 is an ATP binding site. Asp135 acts as the Proton acceptor in catalysis. Ser172 is subject to Phosphoserine; by autocatalysis and IKKB. The Ubiquitin-like domain occupies 309-385 (MVIHVFSLQH…ENPIFVTSRE (77 aa)). Lys401 is covalently cross-linked (Glycyl lysine isopeptide (Lys-Gly) (interchain with G-Cter in ubiquitin)). Coiled coils occupy residues 407-657 (DLDG…LQET) and 658-713 (LPQK…ILER). The interval 621–729 (RKMLHLRKQL…DGGLRNVDCL (109 aa)) is interaction with AZI2, TANK and TBKBP1. A Glycyl lysine isopeptide (Lys-Gly) (interchain with G-Cter in ubiquitin) cross-link involves residue Lys670. Ser716 bears the Phosphoserine mark.

Belongs to the protein kinase superfamily. Ser/Thr protein kinase family. I-kappa-B kinase subfamily. In terms of assembly, homodimer. Interacts with DDX3X, TIRAP and TRAF2. Part of a ternary complex consisting of TANK, TRAF2 and TBK1. Interacts with AZI2, TANK and TBKBP1; these interactions are mutually exclusive and mediate TBK1 activation. Interacts with GSK3B; this interaction promotes TBK1 self-association and autophosphorylation. Interacts with SIKE1; SIKE1 is associated with TBK1 under physiological condition and dissociated from TBK1 upon viral infection or TLR3 stimulation. Interacts with IRF3, leading to IRF3 phosphorylation. Interacts with RIGI. Interacts with CYLD. Interacts with OPTN and TRAF3. Interacts with SRC. Interacts with the exocyst complex subunit SEC5/EXOC2; this interaction is sufficient to trigger TBK1 activity. Interacts with STING1, leading to STING1 phosphorylation. Interacts with IFIT3 (via N-terminus). Interacts with MAVS; interaction only takes place in the presence of IFIT3 and leads to MAVS phosphorylation. Interacts (via protein kinase domain) with TTLL12 (via TTL domain); the interaction prevents MAVS binding to TBK1. Interacts with TICAM1; this interaction is enhanced in the presence of WDFY1 and leads to TICAM1 phosphorylation. Interacts with TRIM26. Interacts with TRIM23. Interacts with TTC4 and IKBKE. Interacts with HNRNPA2B1. Interacts with DDX3X. Interacts with TRIM14. Interacts with CEP170; efficient complex formation may be dependent on the presence of CCDC61. Interacts with TRAF3IP3. Interacts with HSP90AA1; the interaction mediates TBK1 association with TOMM70. Interacts with TAX1BP1. Interacts with kinase IKBKB; the complex interacts with STAT1, leading to phosphorylation of STAT1 on 'Thr-748' by IKBKB. Interacts with ICOS; this interaction is critical for the maturation of T follicular regulatory cells. Interacts with RNF144B; this interaction prevents TBK1 phosphorylation and subsequent activation. Interacts with ASB8; this interaction promotes TBK1 proteasomal degradation. Post-translationally, autophosphorylation at Ser-172 activates the kinase, and is an essential step for virus-triggered signaling. Phosphorylated by IKBKB/IKKB at Ser-172. Phosphorylation requires homodimerization and ubiquitination at Lys-30 and Lys-401. Dephosphorylated at Ser-172 by PPM1B and this negatively regulates its role in mediating antiviral response. In terms of processing, 'Lys-63'-linked polyubiquitination by MIB1 after RNA virus infection, or by NRDP1 after LPS stimulation at Lys-30 and Lys-401, participates in kinase activation. 'Lys-48'-linked polyubiquitination at Lys-670 by DTX4 leads to proteasomal degradation. 'Lys-48'-linked polyubiquitination by TRAIP also leads to proteasomal degradation. 'Lys-48'-linked polyubiquitination by TRAF7; leading to proteasomal degradation. 'Lys-63'-linked polyubiquitination by RNF128 at Lys-30 and Lys-401 leads to the activation of antiviral responses. 'Lys-48'-linked polyubiquitination after 'lys-33'-linked deubiquitination by USP38 promotes TBK1 degradation.

The protein localises to the cytoplasm. It catalyses the reaction L-seryl-[protein] + ATP = O-phospho-L-seryl-[protein] + ADP + H(+). It carries out the reaction L-threonyl-[protein] + ATP = O-phospho-L-threonyl-[protein] + ADP + H(+). Its activity is regulated as follows. Kinase activity is inhibited competitively by amlexanox. Serine/threonine kinase that plays an essential role in regulating inflammatory responses to foreign agents. Following activation of toll-like receptors by viral or bacterial components, associates with TRAF3 and TANK and phosphorylates interferon regulatory factors (IRFs) IRF3 and IRF7 as well as DDX3X. This activity allows subsequent homodimerization and nuclear translocation of the IRFs leading to transcriptional activation of pro-inflammatory and antiviral genes including IFNA and IFNB. In order to establish such an antiviral state, TBK1 form several different complexes whose composition depends on the type of cell and cellular stimuli. Thus, several scaffolding molecules including FADD, TRADD, MAVS, AZI2, TANK or TBKBP1/SINTBAD can be recruited to the TBK1-containing-complexes. Plays a key role in IRF3 activation: acts by first phosphorylating innate adapter proteins MAVS, STING1 and TICAM1 on their pLxIS motif, leading to recruitment of IRF3, thereby licensing IRF3 for phosphorylation by TBK1. Under particular conditions, functions as a NF-kappa-B effector by phosphorylating NF-kappa-B inhibitor alpha/NFKBIA, IKBKB or RELA to translocate NF-Kappa-B to the nucleus. Restricts bacterial proliferation by phosphorylating the autophagy receptor OPTN/Optineurin on 'Ser-177', thus enhancing LC3 binding affinity and antibacterial autophagy. Phosphorylates SMCR8 component of the C9orf72-SMCR8 complex, promoting autophagosome maturation. Phosphorylates ATG8 proteins MAP1LC3C and GABARAPL2, thereby preventing their delipidation and premature removal from nascent autophagosomes. Seems to play a role in energy balance regulation by sustaining a state of chronic, low-grade inflammation in obesity, which leads to a negative impact on insulin sensitivity. Acts both as a positive and negative regulator of the mTORC1 complex, depending on the context: activates mTORC1 in response to growth factors by catalyzing phosphorylation of MTOR, while it limits the mTORC1 complex by promoting phosphorylation of RPTOR. Acts as a positive regulator of the mTORC2 complex by mediating phosphorylation of MTOR, leading to increased phosphorylation and activation of AKT1. Phosphorylates and activates AKT1. Involved in the regulation of TNF-induced RIPK1-mediated cell death, probably acting via CYLD phosphorylation that in turn controls RIPK1 ubiquitination status. Also participates in the differentiation of T follicular regulatory cells together with the receptor ICOS. The protein is Serine/threonine-protein kinase TBK1 of Mus musculus (Mouse).